Reading from the N-terminus, the 248-residue chain is Cytochrome c oxidase subunit 2 (248 aa).

The first 12 residues, 1–12 (MLLMNLFTIINN), serve as a signal peptide directing secretion. At 13 to 39 (DVPTPYNMYFQDSTTPHQEGILELHDN) the chain is on the mitochondrial intermembrane side. Residues 40-61 (IMFYMLTVLGLVSWMMIIIIKD) traverse the membrane as a helical segment. The Mitochondrial matrix segment spans residues 62–79 (YKNNPITYKYIKHGQMIE). The helical transmembrane segment at 80-104 (IIWTILPAIILLMIAFPSFILLYLC) threads the bilayer. Residues 105 to 248 (DEVISPAMTI…PTFLTWLNEQ (144 aa)) are Mitochondrial intermembrane-facing. The Cu cation site is built by H183, C218, E220, C222, H226, and M229. E220 serves as a coordination point for Mg(2+).

The protein belongs to the cytochrome c oxidase subunit 2 family. In terms of assembly, component of the cytochrome c oxidase (complex IV, CIV), a multisubunit enzyme composed of a catalytic core of 3 subunits and several supernumerary subunits. The complex exists as a monomer or a dimer and forms supercomplexes (SCs) in the inner mitochondrial membrane with ubiquinol-cytochrome c oxidoreductase (cytochrome b-c1 complex, complex III, CIII). The cofactor is Cu cation. In terms of processing, the signal sequence of COX2 is processed by IMP1.

The protein localises to the mitochondrion inner membrane. The catalysed reaction is 4 Fe(II)-[cytochrome c] + O2 + 8 H(+)(in) = 4 Fe(III)-[cytochrome c] + 2 H2O + 4 H(+)(out). In terms of biological role, component of the cytochrome c oxidase, the last enzyme in the mitochondrial electron transport chain which drives oxidative phosphorylation. The respiratory chain contains 3 multisubunit complexes succinate dehydrogenase (complex II, CII), ubiquinol-cytochrome c oxidoreductase (cytochrome b-c1 complex, complex III, CIII) and cytochrome c oxidase (complex IV, CIV), that cooperate to transfer electrons derived from NADH and succinate to molecular oxygen, creating an electrochemical gradient over the inner membrane that drives transmembrane transport and the ATP synthase. Cytochrome c oxidase is the component of the respiratory chain that catalyzes the reduction of oxygen to water. Electrons originating from reduced cytochrome c in the intermembrane space (IMS) are transferred via the dinuclear copper A center (CU(A)) of subunit 2 and heme A of subunit 1 to the active site in subunit 1, a binuclear center (BNC) formed by heme A3 and copper B (CU(B)). The BNC reduces molecular oxygen to 2 water molecules using 4 electrons from cytochrome c in the IMS and 4 protons from the mitochondrial matrix. The chain is Cytochrome c oxidase subunit 2 (COX2) from Eremothecium gossypii (strain ATCC 10895 / CBS 109.51 / FGSC 9923 / NRRL Y-1056) (Yeast).